A 415-amino-acid polypeptide reads, in one-letter code: YDG domain-containing protein At5g47160 (415 aa).

Positions 163–186 are disordered; the sequence is KKLSNASRLRANAHRPTQHKDERR. Residues 262–407 enclose the YDG domain; the sequence is GSVPGIKVGD…NILFKFKLRR (146 aa).

The protein resides in the nucleus. This is YDG domain-containing protein At5g47160 from Arabidopsis thaliana (Mouse-ear cress).